Consider the following 276-residue polypeptide: MTRPIWMGDEPPPDRPPTLAGRGRLALRGGAMALVLMAGLTLHLAVRLIERPLHGGHRPWTPAITPVVCRICVAILGLRYSVRGRPMQHIGAVVANHTGWLDIFTLNACQRLYFVSKDEVADWPFIGWLARATGTVFIRRDPREAKAQQALLEDRIRDGHHLLFFPEGTSTDGLQVLPFKTTLFAAFYTHGLDKVMQIQPVTVNYTAPEGEDPRFYGWWRDMPFATHLAKVLSVARQGAAEVVFHPPLDVSDFPSRKDLAAACEAAVRSGMGQRSR.

Residues 25-47 (LALRGGAMALVLMAGLTLHLAVR) traverse the membrane as a helical segment.

Belongs to the 1-acyl-sn-glycerol-3-phosphate acyltransferase family. OlsA subfamily.

The protein resides in the membrane. The enzyme catalyses a lyso-ornithine lipid + a fatty acyl-[ACP] = an N(2)-[(3R)-3-(acyloxy)acyl]-L-ornithine lipid + holo-[ACP]. It catalyses the reaction a fatty acyl-[ACP] + a 1-acyl-sn-glycero-3-phosphate = a 1,2-diacyl-sn-glycero-3-phosphate + holo-[ACP]. The protein operates within lipid metabolism. Its pathway is phospholipid metabolism. In terms of biological role, catalyzes the second step in the formation of ornithine lipids, which are phosphorus-free membrane lipids. Uses acyl-acyl carrier protein (acyl-AcpP) as an acyl donor and converts lyso-ornithine lipid (LOL) into ornithine lipid (OL). It can also act as an alternate acyl-sn-glycerol-3-phosphate acyltransferase (AGPAT) to ensure glycerophospholipid production. This Rhodobacter capsulatus (strain ATCC BAA-309 / NBRC 16581 / SB1003) protein is Lyso-ornithine lipid O-acyltransferase.